The chain runs to 294 residues: MYB-like transcription factor ODO1 (294 aa).

2 HTH myb-type domains span residues 9-61 (KLGV…TNYL) and 62-116 (RPDL…KKKL). 2 consecutive DNA-binding regions (H-T-H motif) follow at residues 37–61 (WRAV…TNYL) and 89–112 (WSKI…NTHI). 2 disordered regions span residues 128-152 (PLKK…NGHQ) and 171-191 (TEFD…NSSC).

Restricted to the petals, with the highest expression in the limb, probably in both epidermal and mesophyll cell layers.

The protein localises to the nucleus. In terms of biological role, R2R3 MYB-type transcription factor controlling the production of volatile organic compounds (VOCs), including floral volatile benzenoids and phenylpropanoids (FVBP), in flowers of fragrant cultivars (e.g. cv. Mitchell and cv. V26) by regulating the shikimate pathway, via the activation of several genes (e.g. EPSPS, ADT1, PAL1, CFAT and CCoAOMT1). This scent, mostly produced in the evening and night by the petals, attracts the pollinators (e.g. the night-active hawkmoth pollinator Manduca sexta). Promotes the expression of ABCG1 in petals three hours before the onset of volatile scent emission. Anthocyanins production is not controlled by ODO1 as color and scent are produced at different stages of development. Seems to trigger a negative feed-back loop that represses the expression of EOBI. The polypeptide is MYB-like transcription factor ODO1 (Petunia hybrida (Petunia)).